The primary structure comprises 225 residues: Histone H1 (225 aa).

Positions 1 to 20 are disordered; it reads MGPKATSGTRGRGKKVGTKT. One can recognise an H15 domain in the interval 23 to 94; it reads PLPKYKDLIV…GPAGSIKLLK (72 aa). The interval 95-147 is disordered; sequence KAAQPKPEEAKRAAKPAKRVVKAAKPAKAKPAKAAKAAKPAKPVKAAKAASAV. Positions 107-127 are enriched in basic residues; that stretch reads AAKPAKRVVKAAKPAKAKPAK. Low complexity predominate over residues 128-147; that stretch reads AAKAAKPAKPVKAAKAASAV.

It belongs to the histone H1/H5 family.

It localises to the nucleus. The protein localises to the chromosome. In terms of biological role, could act as an H1-type linker histone. The polypeptide is Histone H1 (HHOA) (Eremothecium gossypii (strain ATCC 10895 / CBS 109.51 / FGSC 9923 / NRRL Y-1056) (Yeast)).